A 525-amino-acid polypeptide reads, in one-letter code: G patch domain-containing protein 3 (525 aa).

Disordered regions lie at residues 54–85 (ERGP…PASD) and 246–317 (EQEE…QERT). Residues 274-299 (DEPEDEGQQQEEEEESGSEEDDDRGE) are compositionally biased toward acidic residues. A compositionally biased stretch (basic and acidic residues) spans 300-317 (EWERHEALHEDVTGQERT). Residues 411-459 (TKGIGRKVMERQGWAEGQGLGSRCSGVPEALDGDGQHPRCKRGLGYHGE) form the G-patch domain.

As to quaternary structure, interacts with mitochondrial MAVS; the interaction is markedly increased upon viral infection.

The protein localises to the nucleus. The protein resides in the cytoplasm. Functionally, involved in transcriptional regulation. It is able to activate transcription from CXCR4 promoter and therefore it might control neural crest cell migration involved in ocular and craniofacial development. Is a negative regulator of immune antiviral response, acting via down-regulation of RIG-I-like receptors signaling and inhibition of type I interferon production. The control mechanism involves interaction with mitochondrial MAVS and inhibition of MAVS assembly with downstream proteins implicated in antiviral response, such as TBK1 and TRAF6. The polypeptide is G patch domain-containing protein 3 (Gpatch3) (Mus musculus (Mouse)).